The following is a 165-amino-acid chain: MEQGGSGYRIEIAPNNRAKCKGSLCGRSKILAGTVRFGTFVDSGRFQSWAWKHWGCVTPRMLKNIKNRLGEDDIVNSLDGITALSQEWIDKVVDAINEGHVSESDERESRKLGEKMNVNSQKLKTSSPPKVVRKNKRHHTTVKSVLSDSDLDAEFTDGSEAYEDD.

A PARP-type; degenerate zinc finger spans residues tyrosine 8–histidine 100. Residues histidine 100–glutamate 114 are compositionally biased toward basic and acidic residues. The interval histidine 100–aspartate 165 is disordered. A compositionally biased stretch (polar residues) spans asparagine 117–proline 128. The segment covering valine 131–threonine 141 has biased composition (basic residues). The segment covering serine 149–aspartate 165 has biased composition (acidic residues).

The protein localises to the cytoplasm. It is found in the nucleus. The polypeptide is PARP-type zinc finger-containing protein C13F5.07c (Schizosaccharomyces pombe (strain 972 / ATCC 24843) (Fission yeast)).